The chain runs to 95 residues: Large ribosomal subunit protein bL25 (95 aa).

Belongs to the bacterial ribosomal protein bL25 family. Part of the 50S ribosomal subunit; part of the 5S rRNA/L5/L18/L25 subcomplex. Contacts the 5S rRNA. Binds to the 5S rRNA independently of L5 and L18.

This is one of the proteins that binds to the 5S RNA in the ribosome where it forms part of the central protuberance. This Aeromonas salmonicida (strain A449) protein is Large ribosomal subunit protein bL25.